The chain runs to 500 residues: Probable cytosol aminopeptidase (500 aa).

Mn(2+) is bound by residues Lys265 and Asp270. Lys277 is a catalytic residue. Asp288, Asp347, and Glu349 together coordinate Mn(2+). Arg351 is a catalytic residue.

It belongs to the peptidase M17 family. Mn(2+) serves as cofactor.

Its subcellular location is the cytoplasm. It carries out the reaction Release of an N-terminal amino acid, Xaa-|-Yaa-, in which Xaa is preferably Leu, but may be other amino acids including Pro although not Arg or Lys, and Yaa may be Pro. Amino acid amides and methyl esters are also readily hydrolyzed, but rates on arylamides are exceedingly low.. The catalysed reaction is Release of an N-terminal amino acid, preferentially leucine, but not glutamic or aspartic acids.. Presumably involved in the processing and regular turnover of intracellular proteins. Catalyzes the removal of unsubstituted N-terminal amino acids from various peptides. The chain is Probable cytosol aminopeptidase from Rickettsia massiliae (strain Mtu5).